Reading from the N-terminus, the 582-residue chain is Probable DNA ligase (582 aa).

Glu-243 contacts ATP. The active-site N6-AMP-lysine intermediate is Lys-245. ATP is bound by residues Arg-250, Arg-265, Glu-295, Phe-335, Arg-410, and Lys-416.

The protein belongs to the ATP-dependent DNA ligase family. Mg(2+) is required as a cofactor.

The catalysed reaction is ATP + (deoxyribonucleotide)n-3'-hydroxyl + 5'-phospho-(deoxyribonucleotide)m = (deoxyribonucleotide)n+m + AMP + diphosphate.. DNA ligase that seals nicks in double-stranded DNA during DNA replication, DNA recombination and DNA repair. In Dictyoglomus turgidum (strain DSM 6724 / Z-1310), this protein is Probable DNA ligase.